Here is a 129-residue protein sequence, read N- to C-terminus: Small ribosomal subunit protein uS11 (129 aa).

Belongs to the universal ribosomal protein uS11 family. Part of the 30S ribosomal subunit. Interacts with proteins S7 and S18. Binds to IF-3.

Located on the platform of the 30S subunit, it bridges several disparate RNA helices of the 16S rRNA. Forms part of the Shine-Dalgarno cleft in the 70S ribosome. This Pseudomonas putida (strain GB-1) protein is Small ribosomal subunit protein uS11.